The sequence spans 404 residues: Probable tRNA sulfurtransferase (404 aa).

Residues 60–165 (EPVAEALKNV…DEAAYISHEE (106 aa)) form the THUMP domain. Residues 183 to 184 (ML), 208 to 209 (HF), R265, G287, and Q296 contribute to the ATP site.

Belongs to the ThiI family.

The protein localises to the cytoplasm. It catalyses the reaction [ThiI sulfur-carrier protein]-S-sulfanyl-L-cysteine + a uridine in tRNA + 2 reduced [2Fe-2S]-[ferredoxin] + ATP + H(+) = [ThiI sulfur-carrier protein]-L-cysteine + a 4-thiouridine in tRNA + 2 oxidized [2Fe-2S]-[ferredoxin] + AMP + diphosphate. The catalysed reaction is [ThiS sulfur-carrier protein]-C-terminal Gly-Gly-AMP + S-sulfanyl-L-cysteinyl-[cysteine desulfurase] + AH2 = [ThiS sulfur-carrier protein]-C-terminal-Gly-aminoethanethioate + L-cysteinyl-[cysteine desulfurase] + A + AMP + 2 H(+). It participates in cofactor biosynthesis; thiamine diphosphate biosynthesis. Catalyzes the ATP-dependent transfer of a sulfur to tRNA to produce 4-thiouridine in position 8 of tRNAs, which functions as a near-UV photosensor. Also catalyzes the transfer of sulfur to the sulfur carrier protein ThiS, forming ThiS-thiocarboxylate. This is a step in the synthesis of thiazole, in the thiamine biosynthesis pathway. The sulfur is donated as persulfide by IscS. The sequence is that of Probable tRNA sulfurtransferase from Streptococcus uberis (strain ATCC BAA-854 / 0140J).